The chain runs to 75 residues: Exodeoxyribonuclease 7 small subunit (75 aa).

The protein belongs to the XseB family. As to quaternary structure, heterooligomer composed of large and small subunits.

It localises to the cytoplasm. The catalysed reaction is Exonucleolytic cleavage in either 5'- to 3'- or 3'- to 5'-direction to yield nucleoside 5'-phosphates.. Its function is as follows. Bidirectionally degrades single-stranded DNA into large acid-insoluble oligonucleotides, which are then degraded further into small acid-soluble oligonucleotides. The protein is Exodeoxyribonuclease 7 small subunit of Geobacter sp. (strain M21).